The chain runs to 103 residues: Hexon-interlacing protein (103 aa).

Residues leucine 72 to arginine 99 are a coiled coil.

The protein belongs to the adenoviridae hexon-interlacing protein family. Homotrimer. Interacts with hexon protein; this interaction tethers the hexons together. Self-interacts with adjacent proteins. Interacts with kinesin light chain KLC1; this interaction leads to capsid disruption at the nuclear pore complex during virus entry into host cell.

It is found in the virion. The protein localises to the host nucleus. Structural component of the virion that acts as a cement protein on the capsid exterior and forms triskelion structures consisting of three molecules that stabilize three hexon trimers at the center of each icosahedral facet and fixes the peripentonal hexons. Dispensable for assembly. During virus entry, recruits the anterograde motor kinesin-1 to the capsid docked at the nuclear pore complex thereby subjecting the docked capsid to a pulling force. The resulting tension leads to capsid disruption, dispersion of capsid fragments toward cell periphery and eventually viral DNA entry into the host nucleus. This chain is Hexon-interlacing protein, found in Canis lupus familiaris (Dog).